The primary structure comprises 1415 residues: DNA-directed RNA polymerase subunit beta' (1415 aa).

Zn(2+) contacts are provided by C70, C72, C85, and C88. Mg(2+) is bound by residues D461, D463, and D465. The Zn(2+) site is built by C820, C894, C901, and C904. Positions 1382 to 1415 are disordered; the sequence is ERERAQAIADEEQSLFIEPPPVVQATTEGEGDNA.

It belongs to the RNA polymerase beta' chain family. In terms of assembly, the RNAP catalytic core consists of 2 alpha, 1 beta, 1 beta' and 1 omega subunit. When a sigma factor is associated with the core the holoenzyme is formed, which can initiate transcription. Mg(2+) serves as cofactor. Requires Zn(2+) as cofactor.

It catalyses the reaction RNA(n) + a ribonucleoside 5'-triphosphate = RNA(n+1) + diphosphate. Functionally, DNA-dependent RNA polymerase catalyzes the transcription of DNA into RNA using the four ribonucleoside triphosphates as substrates. The protein is DNA-directed RNA polymerase subunit beta' of Cupriavidus pinatubonensis (strain JMP 134 / LMG 1197) (Cupriavidus necator (strain JMP 134)).